The following is a 150-amino-acid chain: uncharacterized protein (150 aa).

Residues 81-90 (TTKPSCSFAQ) are compositionally biased toward polar residues. The interval 81–125 (TTKPSCSFAQPVTPRTREGAGVRGHRRRRRGSLSLIPWKTSNDKQ) is disordered.

This is an uncharacterized protein from Homo sapiens (Human).